An 885-amino-acid chain; its full sequence is Alanine--tRNA ligase (885 aa).

4 residues coordinate Zn(2+): His574, His578, Cys676, and His680.

The protein belongs to the class-II aminoacyl-tRNA synthetase family. It depends on Zn(2+) as a cofactor.

It is found in the cytoplasm. It catalyses the reaction tRNA(Ala) + L-alanine + ATP = L-alanyl-tRNA(Ala) + AMP + diphosphate. Catalyzes the attachment of alanine to tRNA(Ala) in a two-step reaction: alanine is first activated by ATP to form Ala-AMP and then transferred to the acceptor end of tRNA(Ala). Also edits incorrectly charged Ser-tRNA(Ala) and Gly-tRNA(Ala) via its editing domain. The protein is Alanine--tRNA ligase of Syntrophobacter fumaroxidans (strain DSM 10017 / MPOB).